Consider the following 288-residue polypeptide: Phosphatidylserine decarboxylase proenzyme (288 aa).

Catalysis depends on charge relay system; for autoendoproteolytic cleavage activity residues D91, H148, and S254. S254 functions as the Schiff-base intermediate with substrate; via pyruvic acid; for decarboxylase activity in the catalytic mechanism. Position 254 is a pyruvic acid (Ser); by autocatalysis (S254).

It belongs to the phosphatidylserine decarboxylase family. PSD-B subfamily. Prokaryotic type I sub-subfamily. As to quaternary structure, heterodimer of a large membrane-associated beta subunit and a small pyruvoyl-containing alpha subunit. Pyruvate serves as cofactor. Is synthesized initially as an inactive proenzyme. Formation of the active enzyme involves a self-maturation process in which the active site pyruvoyl group is generated from an internal serine residue via an autocatalytic post-translational modification. Two non-identical subunits are generated from the proenzyme in this reaction, and the pyruvate is formed at the N-terminus of the alpha chain, which is derived from the carboxyl end of the proenzyme. The autoendoproteolytic cleavage occurs by a canonical serine protease mechanism, in which the side chain hydroxyl group of the serine supplies its oxygen atom to form the C-terminus of the beta chain, while the remainder of the serine residue undergoes an oxidative deamination to produce ammonia and the pyruvoyl prosthetic group on the alpha chain. During this reaction, the Ser that is part of the protease active site of the proenzyme becomes the pyruvoyl prosthetic group, which constitutes an essential element of the active site of the mature decarboxylase.

The protein resides in the cell membrane. The catalysed reaction is a 1,2-diacyl-sn-glycero-3-phospho-L-serine + H(+) = a 1,2-diacyl-sn-glycero-3-phosphoethanolamine + CO2. It functions in the pathway phospholipid metabolism; phosphatidylethanolamine biosynthesis; phosphatidylethanolamine from CDP-diacylglycerol: step 2/2. Its function is as follows. Catalyzes the formation of phosphatidylethanolamine (PtdEtn) from phosphatidylserine (PtdSer). This chain is Phosphatidylserine decarboxylase proenzyme, found in Pseudoalteromonas translucida (strain TAC 125).